Here is a 51-residue protein sequence, read N- to C-terminus: Sperm protamine P1 (51 aa).

It belongs to the protamine P1 family. As to quaternary structure, cross-linked by interchain disulfide bonds around the DNA-helix. As to expression, testis.

The protein localises to the nucleus. It is found in the chromosome. Its function is as follows. Protamines substitute for histones in the chromatin of sperm during the haploid phase of spermatogenesis. They compact sperm DNA into a highly condensed, stable and inactive complex. The sequence is that of Sperm protamine P1 (PRM1) from Hylobates lar (Lar gibbon).